The chain runs to 383 residues: Protein delta homolog 1 (383 aa).

The signal sequence occupies residues 1-23 (MIATGALLRVLLLLLAFGHSTYG). EGF-like domains are found at residues 24–55 (AECD…PLCE), 59–86 (TSPG…KFCE), 88–125 (DIRA…KDCQ), 127–168 (KAGP…NFCE), 170–206 (VTNS…KTCS), and 208–245 (PVSN…PTCA). The Extracellular portion of the chain corresponds to 24–306 (AECDPACDPQ…PLLTEGQAIC (283 aa)). Intrachain disulfides connect cysteine 26-cysteine 37, cysteine 30-cysteine 43, cysteine 45-cysteine 54, cysteine 63-cysteine 68, cysteine 76-cysteine 85, cysteine 92-cysteine 103, cysteine 97-cysteine 113, cysteine 115-cysteine 124, cysteine 131-cysteine 144, cysteine 138-cysteine 156, cysteine 158-cysteine 167, cysteine 174-cysteine 185, cysteine 179-cysteine 194, cysteine 196-cysteine 205, cysteine 212-cysteine 223, cysteine 217-cysteine 233, and cysteine 235-cysteine 244. A helical membrane pass occupies residues 307–327 (FTILGVLTSLVVLGTVAIVFL). At 328-383 (NKCEAWVSNLRYNHMLRKKKNLLLQYNSGEELAVNIIFPEKIDMTTFNKEAGDEDI) the chain is on the cytoplasmic side.

In terms of assembly, monomer. Interacts with SH3RF2. In terms of processing, glycosylated. Pancreas and adrenal glands (at protein level).

It localises to the membrane. The protein localises to the cytoplasm. In terms of biological role, may have a role in neuroendocrine differentiation. Inhibits adipocyte differentiation. The polypeptide is Protein delta homolog 1 (Dlk1) (Rattus norvegicus (Rat)).